Here is a 310-residue protein sequence, read N- to C-terminus: Olfactory receptor 2A12 (310 aa).

Residues 1–24 (MESNQTWITEVILLGFQVDPALEL) are Extracellular-facing. N-linked (GlcNAc...) asparagine glycosylation is present at N4. A helical transmembrane segment spans residues 25–48 (FLFGFFLLFYSLTLMGNGIILGLI). The Cytoplasmic segment spans residues 49–56 (YLDSRLHT). The chain crosses the membrane as a helical span at residues 57–78 (PMYVFLSHLAIVDMSYASSTVP). Topologically, residues 79–99 (KMLANLVMHKKVISFAPCILQ) are extracellular. A disulfide bridge connects residues C96 and C188. A helical membrane pass occupies residues 100–119 (TFLYLAFAITECLILVMMCY). Topologically, residues 120–138 (DRYVAICHPLQYTLIMNWR) are cytoplasmic. Residues 139 to 157 (VCTVLASTCWIFSFLLALV) traverse the membrane as a helical segment. Topologically, residues 158-194 (HITLILRLPFCGPQKINHFFCQIMSVFKLACADTRLN) are extracellular. Residues 195–218 (QVVLFAGSAFILVGPLCLVLVSYL) form a helical membrane-spanning segment. Residues 219-235 (HILVAILRIQSGEGRRK) are Cytoplasmic-facing. A helical membrane pass occupies residues 236 to 258 (AFSTCSSHLCVVGLFFGSAIVMY). At 259–271 (MAPKSSHSQERRK) the chain is on the extracellular side. The chain crosses the membrane as a helical span at residues 272-291 (ILSLFYSLFNPILNPLIYSL). Topologically, residues 292–310 (RNAEVKGALKRVLWKQRSM) are cytoplasmic.

Belongs to the G-protein coupled receptor 1 family.

It is found in the cell membrane. Its function is as follows. Odorant receptor. In Homo sapiens (Human), this protein is Olfactory receptor 2A12 (OR2A12).